Here is a 472-residue protein sequence, read N- to C-terminus: Probable glycine dehydrogenase (decarboxylating) subunit 2 (472 aa).

N6-(pyridoxal phosphate)lysine is present on K268.

The protein belongs to the GcvP family. C-terminal subunit subfamily. As to quaternary structure, the glycine cleavage system is composed of four proteins: P, T, L and H. In this organism, the P 'protein' is a heterodimer of two subunits. It depends on pyridoxal 5'-phosphate as a cofactor.

It catalyses the reaction N(6)-[(R)-lipoyl]-L-lysyl-[glycine-cleavage complex H protein] + glycine + H(+) = N(6)-[(R)-S(8)-aminomethyldihydrolipoyl]-L-lysyl-[glycine-cleavage complex H protein] + CO2. The glycine cleavage system catalyzes the degradation of glycine. The P protein binds the alpha-amino group of glycine through its pyridoxal phosphate cofactor; CO(2) is released and the remaining methylamine moiety is then transferred to the lipoamide cofactor of the H protein. This Thermoplasma acidophilum (strain ATCC 25905 / DSM 1728 / JCM 9062 / NBRC 15155 / AMRC-C165) protein is Probable glycine dehydrogenase (decarboxylating) subunit 2.